Reading from the N-terminus, the 349-residue chain is UDP-3-O-acylglucosamine N-acyltransferase 1 (349 aa).

His-241 (proton acceptor) is an active-site residue.

The protein belongs to the transferase hexapeptide repeat family. LpxD subfamily. Homotrimer.

It carries out the reaction a UDP-3-O-[(3R)-3-hydroxyacyl]-alpha-D-glucosamine + a (3R)-hydroxyacyl-[ACP] = a UDP-2-N,3-O-bis[(3R)-3-hydroxyacyl]-alpha-D-glucosamine + holo-[ACP] + H(+). It functions in the pathway bacterial outer membrane biogenesis; LPS lipid A biosynthesis. Catalyzes the N-acylation of UDP-3-O-acylglucosamine using 3-hydroxyacyl-ACP as the acyl donor. Is involved in the biosynthesis of lipid A, a phosphorylated glycolipid that anchors the lipopolysaccharide to the outer membrane of the cell. In Gloeobacter violaceus (strain ATCC 29082 / PCC 7421), this protein is UDP-3-O-acylglucosamine N-acyltransferase 1.